The chain runs to 372 residues: Actin-related protein T3 (372 aa).

This sequence belongs to the actin family. Interacts with PFN3. Ubiquitously expressed.

Its subcellular location is the cytoplasm. It localises to the cytoskeleton. The protein resides in the nucleus. This is Actin-related protein T3 (ACTRT3) from Homo sapiens (Human).